The primary structure comprises 294 residues: MKQTTIARRVETVGIGLHKGEPIRLVLEPLDANMGIVFHRTDIGASFKAEPANVVNTQMATVIGNEKGFISTVEHLLSAINGYGIDNIRILVDANEIPVMDGSAISFCMLLDEAGIKQLDEGKKVILVRKEVEVAEGSKFVRTVPSRNPKFDYTIKFNHPVIGEQRYVFEFSKSRYVKEIARARTFGFLKDLQRLQAQNLALGASLDNAVAIDDTHILNPEGLRFENEFVRHKILDAVGDLSLLGAPLLGDYIAFAGSHDLNHKLTLAVLADEKNYEIATLSGELLKDYQKVFA.

Zn(2+)-binding residues include H75, H232, and D236. H259 functions as the Proton donor in the catalytic mechanism.

Belongs to the LpxC family. Zn(2+) serves as cofactor.

It carries out the reaction a UDP-3-O-[(3R)-3-hydroxyacyl]-N-acetyl-alpha-D-glucosamine + H2O = a UDP-3-O-[(3R)-3-hydroxyacyl]-alpha-D-glucosamine + acetate. The protein operates within glycolipid biosynthesis; lipid IV(A) biosynthesis; lipid IV(A) from (3R)-3-hydroxytetradecanoyl-[acyl-carrier-protein] and UDP-N-acetyl-alpha-D-glucosamine: step 2/6. In terms of biological role, catalyzes the hydrolysis of UDP-3-O-myristoyl-N-acetylglucosamine to form UDP-3-O-myristoylglucosamine and acetate, the committed step in lipid A biosynthesis. The chain is UDP-3-O-acyl-N-acetylglucosamine deacetylase from Campylobacter curvus (strain 525.92).